We begin with the raw amino-acid sequence, 648 residues long: MDDTKKRIHKYIEKHDLIRSDDKLLVAVSGGPDSFALLHFLWSANLVPKEAIAVAHLNHHLRENAEKEQLAVQTFCEERDIPFFIEEVDVKKRAEKLQKGIEETARIVRYDFFEKVMAENNINKLVLAHHADDQIETILMRLVRGSSSIGWSGIQPKREVRGGYAIRPFLPITKAEIIEYATKHALPYEIDESNTSQEYTRNRYRTQLLPFLSKENPAVYEHFKRFSEETSEDFQFLEELASNLLKKNLIQNGKQSTLLLSDFKNEANPLQRRAIHLLLMYLYNDDGRVITVNHIYQIIQMIQSENPSSSIDLPKKLTVIRSYNELHFQFGERHAPPEFYHQLELNDRIELDNKASIRLKLKSSVVQTNGLNGMLLDAEDITLPLIVRNRVNGDRMTMKGQAGSKKLKDIFIDAKIPRQERDNLPVITDYTGKILWVPGVKKSAYDREFSRSKKQYIIRYTRNIGGNESMHNDIQKVLISEDELQEKIRELGRELTAEYEGRNPLVVGVLKGATPFMTDLLKRIDTYLEMDFMDVSSYGNGTVSSGEVKIIKDLNASVEGRDVLIIEDIIDSGRTLSYLVDLIKYRKAKSVKLVTLLDKPAGRNVAIEADYVGFVVPNEFVVGYGLDYAERYRNLPYIGILKPEIYSE.

An ATP-binding site is contributed by 29 to 34; the sequence is SGGPDS. Aspartate 627 lines the Mg(2+) pocket.

This sequence in the N-terminal section; belongs to the tRNA(Ile)-lysidine synthase family. The protein in the C-terminal section; belongs to the purine/pyrimidine phosphoribosyltransferase family. Requires Mg(2+) as cofactor.

It localises to the cytoplasm. The enzyme catalyses IMP + diphosphate = hypoxanthine + 5-phospho-alpha-D-ribose 1-diphosphate. It catalyses the reaction GMP + diphosphate = guanine + 5-phospho-alpha-D-ribose 1-diphosphate. The catalysed reaction is cytidine(34) in tRNA(Ile2) + L-lysine + ATP = lysidine(34) in tRNA(Ile2) + AMP + diphosphate + H(+). Ligates lysine onto the cytidine present at position 34 of the AUA codon-specific tRNA(Ile) that contains the anticodon CAU, in an ATP-dependent manner. Cytidine is converted to lysidine, thus changing the amino acid specificity of the tRNA from methionine to isoleucine. This is Bifunctional protein TilS/HprT (tilS/hprT) from Listeria innocua serovar 6a (strain ATCC BAA-680 / CLIP 11262).